The following is a 245-amino-acid chain: Adenosine 5'-phosphosulfate reductase (245 aa).

The [4Fe-4S] cluster site is built by Cys124, Cys125, Cys205, and Cys208. Residue Cys231 is the Nucleophile; cysteine thiosulfonate intermediate of the active site.

Belongs to the PAPS reductase family. CysH subfamily. [4Fe-4S] cluster serves as cofactor.

The protein resides in the cytoplasm. The enzyme catalyses [thioredoxin]-disulfide + sulfite + AMP + 2 H(+) = adenosine 5'-phosphosulfate + [thioredoxin]-dithiol. It participates in sulfur metabolism; hydrogen sulfide biosynthesis; sulfite from sulfate. In terms of biological role, catalyzes the formation of sulfite from adenosine 5'-phosphosulfate (APS) using thioredoxin as an electron donor. The polypeptide is Adenosine 5'-phosphosulfate reductase (Chelativorans sp. (strain BNC1)).